The following is a 546-amino-acid chain: Peroxisomal OPC-8:0-CoA ligase 1 (546 aa).

The ATP site is built by Ser-197, Ser-198, Gly-199, Thr-200, Thr-201, and Lys-205. A CoA-binding site is contributed by Lys-265. Residues 267 to 338 are SBD1; it reads EMHEMMSAIG…EKYPTVKILQ (72 aa). Gln-338, Gly-339, Thr-343, Asp-424, and Arg-439 together coordinate ATP. The tract at residues 339–403 is SBD2; sequence GYGLTESTGI…LKGPSIMKGY (65 aa). Positions 447 and 448 each coordinate CoA. Position 530 (Lys-530) interacts with ATP. Positions 544 to 546 match the Microbody targeting signal motif; it reads SKL.

Belongs to the ATP-dependent AMP-binding enzyme family. It depends on Mg(2+) as a cofactor. Expressed at low levels in seedlings, cotyledons, leaves, hypocotyls and roots.

The protein localises to the peroxisome. It carries out the reaction (9S,13S,15Z)-12-oxophyto-10,15-dienoate + ATP + CoA = (10Z,15Z)-12-oxophytodienoyl-CoA + AMP + diphosphate. The enzyme catalyses (1S,2S)-OPC-8 + ATP + CoA = OPC8-CoA + AMP + diphosphate. It catalyses the reaction hexadecanoate + ATP + CoA = hexadecanoyl-CoA + AMP + diphosphate. The catalysed reaction is (9Z)-octadecenoate + ATP + CoA = (9Z)-octadecenoyl-CoA + AMP + diphosphate. It carries out the reaction tetradecanoate + ATP + CoA = tetradecanoyl-CoA + AMP + diphosphate. The enzyme catalyses decanoate + ATP + CoA = decanoyl-CoA + AMP + diphosphate. It catalyses the reaction dodecanoate + ATP + CoA = dodecanoyl-CoA + AMP + diphosphate. The catalysed reaction is octadecanoate + ATP + CoA = octadecanoyl-CoA + AMP + diphosphate. It carries out the reaction OPC-6 + ATP + CoA = OPC-6-CoA + AMP + diphosphate. The enzyme catalyses dinor-OPDA + ATP + CoA = dinor-OPDA-CoA + AMP + diphosphate. In terms of biological role, contributes to jasmonic acid biosynthesis by initiating the beta-oxidative chain shortening of its precursors. Converts 12-oxo-phytodienoic acid (OPDA) and 3-oxo-2-(2'-pentenyl)-cyclopentane-1-octanoic acid (OPC-8:0) into OPDA-CoA and OPC-8:0-CoA, respectively. Follows a two-step reaction mechanism, wherein the carboxylate substrate first undergoes adenylation by ATP, followed by a thioesterification in the presence of CoA to yield the final CoA thioester. The polypeptide is Peroxisomal OPC-8:0-CoA ligase 1 (Arabidopsis thaliana (Mouse-ear cress)).